The following is a 376-amino-acid chain: Transmembrane protein 183A (376 aa).

2 disordered regions span residues 1–20 and 100–127; these read MARG…AMPK and MDAQ…ELDG. A helical transmembrane segment spans residues 300–320; the sequence is LNFIFIPIVMGMIFTLFTINV.

It belongs to the TMEM183 family.

It localises to the membrane. The chain is Transmembrane protein 183A (TMEM183A) from Homo sapiens (Human).